The following is a 127-amino-acid chain: Large-conductance mechanosensitive channel (127 aa).

Helical transmembrane passes span 9–29 (EFAM…GVAF), 32–52 (IVTA…LGGV), and 75–95 (VIDF…INLL).

The protein belongs to the MscL family. As to quaternary structure, homopentamer.

It localises to the cell inner membrane. Functionally, channel that opens in response to stretch forces in the membrane lipid bilayer. May participate in the regulation of osmotic pressure changes within the cell. The protein is Large-conductance mechanosensitive channel of Legionella pneumophila (strain Corby).